A 284-amino-acid polypeptide reads, in one-letter code: Citrate lyase subunit beta-like protein (284 aa).

2 residues coordinate substrate: Arg-74 and Glu-129. The Mg(2+) site is built by Glu-129 and Asp-155.

Belongs to the HpcH/HpaI aldolase family. Citrate lyase beta subunit-like subfamily. Homotrimer. It depends on Mg(2+) as a cofactor.

Its function is as follows. May play a role in fatty acid biosynthesis. This is Citrate lyase subunit beta-like protein from Deinococcus radiodurans (strain ATCC 13939 / DSM 20539 / JCM 16871 / CCUG 27074 / LMG 4051 / NBRC 15346 / NCIMB 9279 / VKM B-1422 / R1).